The sequence spans 131 residues: Profilin-2 (131 aa).

Cys-13 and Cys-115 are disulfide-bonded. Residues 81-97 carry the Involved in PIP2 interaction motif; it reads AVIRGKKGAGGITIKKT. Thr-111 bears the Phosphothreonine mark.

Belongs to the profilin family. In terms of assembly, occurs in many kinds of cells as a complex with monomeric actin in a 1:1 ratio. Phosphorylated by MAP kinases.

The protein localises to the cytoplasm. It localises to the cytoskeleton. Functionally, binds to actin and affects the structure of the cytoskeleton. At high concentrations, profilin prevents the polymerization of actin, whereas it enhances it at low concentrations. By binding to PIP2, it inhibits the formation of IP3 and DG. The chain is Profilin-2 (PRO2) from Phleum pratense (Common timothy).